Reading from the N-terminus, the 195-residue chain is Recombination protein RecR (195 aa).

The segment at 53 to 68 adopts a C4-type zinc-finger fold; it reads CPVCFNIDVKSPCSIC. The 96-residue stretch at 76 to 171 folds into the Toprim domain; sequence QLLCIVEELG…KVTRLACGIP (96 aa).

The protein belongs to the RecR family.

Its function is as follows. May play a role in DNA repair. It seems to be involved in an RecBC-independent recombinational process of DNA repair. It may act with RecF and RecO. This chain is Recombination protein RecR, found in Ehrlichia chaffeensis (strain ATCC CRL-10679 / Arkansas).